The chain runs to 121 residues: Large ribosomal subunit protein uL14 (121 aa).

It belongs to the universal ribosomal protein uL14 family. Part of the 50S ribosomal subunit. Forms a cluster with proteins L3 and L19. In the 70S ribosome, L14 and L19 interact and together make contacts with the 16S rRNA in bridges B5 and B8.

Binds to 23S rRNA. Forms part of two intersubunit bridges in the 70S ribosome. The chain is Large ribosomal subunit protein uL14 from Synechococcus sp. (strain WH7803).